We begin with the raw amino-acid sequence, 272 residues long: Pyrroline-5-carboxylate reductase 3 (272 aa).

This sequence belongs to the pyrroline-5-carboxylate reductase family.

The protein resides in the cytoplasm. The enzyme catalyses L-proline + NADP(+) = (S)-1-pyrroline-5-carboxylate + NADPH + 2 H(+). The catalysed reaction is L-proline + NAD(+) = (S)-1-pyrroline-5-carboxylate + NADH + 2 H(+). Its pathway is amino-acid biosynthesis; L-proline biosynthesis; L-proline from L-glutamate 5-semialdehyde: step 1/1. Its function is as follows. Catalyzes the reduction of 1-pyrroline-5-carboxylate (PCA) to L-proline. In Bacillus subtilis (strain 168), this protein is Pyrroline-5-carboxylate reductase 3 (proG).